A 124-amino-acid polypeptide reads, in one-letter code: Competence protein ComGG (124 aa).

An N-terminal signal peptide occupies residues 1–28 (MYRTRGFIYPAVLFVSALVLLIVNFVAA).

As to quaternary structure, the transformation pili are flexible filaments, consisting mainly of the major pilin ComGC and smaller amounts of the minor pilins, including at least ComGD, ComGF and ComGG. Interacts with ComGC; the interaction is probably direct. Interacts with ComGD. Interacts with ComGF. May act as a link between ComGC, ComGD and ComGF. Homodimer; disulfide-linked. A minor fraction of ComGG is found as a disulfide-bonded homodimer. Partial processing of ComGG in competent cells requires ComC.

Its subcellular location is the cell membrane. The protein localises to the secreted. Functionally, required for formation of the type IV-like pilus (T4P) that plays a role in transformation. Transformation pili are dynamically extended and retracted, perhaps thereby promoting DNA uptake and transformation. Required for transformation and DNA binding. The chain is Competence protein ComGG (comGG) from Bacillus subtilis (strain 168).